The sequence spans 475 residues: Ribulose bisphosphate carboxylase large chain (475 aa).

The propeptide occupies 1–2 (MS). An N-acetylproline modification is found at Pro3. Residue Lys14 is modified to N6,N6,N6-trimethyllysine. Positions 123 and 173 each coordinate substrate. Residue Lys175 is the Proton acceptor of the active site. Position 177 (Lys177) interacts with substrate. Mg(2+) contacts are provided by Lys201, Asp203, and Glu204. Lys201 carries the post-translational modification N6-carboxylysine. Catalysis depends on His294, which acts as the Proton acceptor. The substrate site is built by Arg295, His327, and Ser379.

It belongs to the RuBisCO large chain family. Type I subfamily. As to quaternary structure, heterohexadecamer of 8 large chains and 8 small chains; disulfide-linked. The disulfide link is formed within the large subunit homodimers. It depends on Mg(2+) as a cofactor. Post-translationally, the disulfide bond which can form in the large chain dimeric partners within the hexadecamer appears to be associated with oxidative stress and protein turnover.

It localises to the plastid. The protein resides in the chloroplast. The catalysed reaction is 2 (2R)-3-phosphoglycerate + 2 H(+) = D-ribulose 1,5-bisphosphate + CO2 + H2O. The enzyme catalyses D-ribulose 1,5-bisphosphate + O2 = 2-phosphoglycolate + (2R)-3-phosphoglycerate + 2 H(+). RuBisCO catalyzes two reactions: the carboxylation of D-ribulose 1,5-bisphosphate, the primary event in carbon dioxide fixation, as well as the oxidative fragmentation of the pentose substrate in the photorespiration process. Both reactions occur simultaneously and in competition at the same active site. This chain is Ribulose bisphosphate carboxylase large chain, found in Magnolia macrophylla (Bigleaf magnolia).